Consider the following 357-residue polypeptide: UDP-N-acetylglucosamine--N-acetylmuramyl-(pentapeptide) pyrophosphoryl-undecaprenol N-acetylglucosamine transferase (357 aa).

UDP-N-acetyl-alpha-D-glucosamine contacts are provided by residues 12-14 (TGG), Asn-124, Arg-163, Ser-191, Ile-245, 264-269 (ALTVSE), and Gln-290.

This sequence belongs to the glycosyltransferase 28 family. MurG subfamily.

It localises to the cell inner membrane. The catalysed reaction is di-trans,octa-cis-undecaprenyl diphospho-N-acetyl-alpha-D-muramoyl-L-alanyl-D-glutamyl-meso-2,6-diaminopimeloyl-D-alanyl-D-alanine + UDP-N-acetyl-alpha-D-glucosamine = di-trans,octa-cis-undecaprenyl diphospho-[N-acetyl-alpha-D-glucosaminyl-(1-&gt;4)]-N-acetyl-alpha-D-muramoyl-L-alanyl-D-glutamyl-meso-2,6-diaminopimeloyl-D-alanyl-D-alanine + UDP + H(+). It participates in cell wall biogenesis; peptidoglycan biosynthesis. Cell wall formation. Catalyzes the transfer of a GlcNAc subunit on undecaprenyl-pyrophosphoryl-MurNAc-pentapeptide (lipid intermediate I) to form undecaprenyl-pyrophosphoryl-MurNAc-(pentapeptide)GlcNAc (lipid intermediate II). The sequence is that of UDP-N-acetylglucosamine--N-acetylmuramyl-(pentapeptide) pyrophosphoryl-undecaprenol N-acetylglucosamine transferase from Nitrosospira multiformis (strain ATCC 25196 / NCIMB 11849 / C 71).